The primary structure comprises 333 residues: Holliday junction branch migration complex subunit RuvB (333 aa).

The tract at residues 1–182 (MEERMVSAEA…FGVMARLEYY (182 aa)) is large ATPase domain (RuvB-L). Residues Ile-21, Arg-22, Gly-63, Lys-66, Thr-67, Thr-68, 129–131 (EDY), Arg-172, Tyr-182, and Arg-219 each bind ATP. Thr-67 contributes to the Mg(2+) binding site. Residues 183-253 (NVEELTTIIE…RAIESLERLQ (71 aa)) are small ATPAse domain (RuvB-S). The segment at 256 to 333 (RLGLDHIDHK…EHFNMEVPNK (78 aa)) is head domain (RuvB-H). DNA contacts are provided by Arg-311 and Arg-316.

The protein belongs to the RuvB family. Homohexamer. Forms an RuvA(8)-RuvB(12)-Holliday junction (HJ) complex. HJ DNA is sandwiched between 2 RuvA tetramers; dsDNA enters through RuvA and exits via RuvB. An RuvB hexamer assembles on each DNA strand where it exits the tetramer. Each RuvB hexamer is contacted by two RuvA subunits (via domain III) on 2 adjacent RuvB subunits; this complex drives branch migration. In the full resolvosome a probable DNA-RuvA(4)-RuvB(12)-RuvC(2) complex forms which resolves the HJ.

It localises to the cytoplasm. It catalyses the reaction ATP + H2O = ADP + phosphate + H(+). Functionally, the RuvA-RuvB-RuvC complex processes Holliday junction (HJ) DNA during genetic recombination and DNA repair, while the RuvA-RuvB complex plays an important role in the rescue of blocked DNA replication forks via replication fork reversal (RFR). RuvA specifically binds to HJ cruciform DNA, conferring on it an open structure. The RuvB hexamer acts as an ATP-dependent pump, pulling dsDNA into and through the RuvAB complex. RuvB forms 2 homohexamers on either side of HJ DNA bound by 1 or 2 RuvA tetramers; 4 subunits per hexamer contact DNA at a time. Coordinated motions by a converter formed by DNA-disengaged RuvB subunits stimulates ATP hydrolysis and nucleotide exchange. Immobilization of the converter enables RuvB to convert the ATP-contained energy into a lever motion, pulling 2 nucleotides of DNA out of the RuvA tetramer per ATP hydrolyzed, thus driving DNA branch migration. The RuvB motors rotate together with the DNA substrate, which together with the progressing nucleotide cycle form the mechanistic basis for DNA recombination by continuous HJ branch migration. Branch migration allows RuvC to scan DNA until it finds its consensus sequence, where it cleaves and resolves cruciform DNA. The polypeptide is Holliday junction branch migration complex subunit RuvB (Halalkalibacterium halodurans (strain ATCC BAA-125 / DSM 18197 / FERM 7344 / JCM 9153 / C-125) (Bacillus halodurans)).